Consider the following 120-residue polypeptide: Basic phospholipase A2 homolog LmutTX (120 aa).

7 disulfides stabilise this stretch: C26–C114, C28–C44, C43–C95, C49–C120, C50–C88, C57–C81, and C75–C86.

This sequence belongs to the phospholipase A2 family. Group II subfamily. K49 sub-subfamily. As to quaternary structure, monomer. Expressed by the venom gland.

Its subcellular location is the secreted. Functionally, snake venom phospholipase A2 homolog that lacks enzymatic activity. Shows moderate cytotoxicity against C2C12 myotubes (activity above 200 ug/mL). Also shows antibacterial activity against both Gram-positive and Gram-negative bacteria. A model of myotoxic mechanism has been proposed: an apo Lys49-PLA2 is activated by the entrance of a hydrophobic molecule (e.g. fatty acid) at the hydrophobic channel of the protein leading to a reorientation of a monomer. This reorientation causes a transition between 'inactive' to 'active' states, causing alignment of C-terminal and membrane-docking sites (MDoS) side-by-side and putting the membrane-disruption sites (MDiS) in the same plane, exposed to solvent and in a symmetric position for both monomers. The MDoS region stabilizes the toxin on membrane by the interaction of charged residues with phospholipid head groups. Subsequently, the MDiS region destabilizes the membrane with penetration of hydrophobic residues. This insertion causes a disorganization of the membrane, allowing an uncontrolled influx of ions (i.e. calcium and sodium), and eventually triggering irreversible intracellular alterations and cell death. The sequence is that of Basic phospholipase A2 homolog LmutTX from Lachesis muta muta (Bushmaster).